The following is a 327-amino-acid chain: MEKNYYALAYYYFGPVSNPYEEIALHKQLFKTMDVSCRIYISEEGINGQFSGYQPDAERYMAWLKQRPDFASIKFKIHHIEENIFPRVTVKYRKELVALGCSVDTTKQGKHISPEEWHEKLQENRCLVLDVRNNYEWKIGHFENAVLPDIETFREFPDYADRLAKEHDPAKTPVMMYCTGGIRCELYSALLLEKGFKEVYQLDGGVIAYGLKMGTGKWRGKLFVFDDRMAMPIDEADPNVSPIARCSLCNTDSDTYYNCANTDCNNLFICCESCIATHKGCCSEECSQAPRIRAFSAERGNKPFRRKHLCPTIEQSCCLKEQENQPA.

The region spanning 122–218 is the Rhodanese domain; it reads QENRCLVLDV…YGLKMGTGKW (97 aa). Cys178 serves as the catalytic Cysteine persulfide intermediate.

It belongs to the TrhO family.

It carries out the reaction uridine(34) in tRNA + AH2 + O2 = 5-hydroxyuridine(34) in tRNA + A + H2O. In terms of biological role, catalyzes oxygen-dependent 5-hydroxyuridine (ho5U) modification at position 34 in tRNAs. This is tRNA uridine(34) hydroxylase from Chlamydia trachomatis serovar L2 (strain ATCC VR-902B / DSM 19102 / 434/Bu).